Reading from the N-terminus, the 115-residue chain is U17-barytoxin-Tl1c (115 aa).

The first 20 residues, 1–20 (MKTIIVFLSLLVLATKFGDA), serve as a signal peptide directing secretion. The propeptide occupies 21-74 (KEGVNQKQKKEVTQNEFREEYLNEMAAMSLVQQLEAIERALFENEAGRNSRQKR). Disulfide bonds link Cys75–Cys89, Cys82–Cys94, and Cys88–Cys109.

Belongs to the neurotoxin 14 (magi-1) family. 03 (ICK-30-40) subfamily. In terms of tissue distribution, expressed by the venom gland.

Its subcellular location is the secreted. In terms of biological role, ion channel inhibitor. In Trittame loki (Brush-footed trapdoor spider), this protein is U17-barytoxin-Tl1c.